Here is a 189-residue protein sequence, read N- to C-terminus: uncharacterized protein (189 aa).

An N-terminal signal peptide occupies residues 1–23; it reads MIKTTPHKIVILMGILLSPSVFA. Positions 104-125 are disordered; the sequence is SSPKLIIPQSGDSSSTTSNIGM. Positions 113–123 are enriched in polar residues; it reads SGDSSSTTSNI.

It belongs to the fimbrial protein family.

It localises to the fimbrium. Part of the yadCKLM-htrE-yadVN fimbrial operon. Could contribute to adhesion to various surfaces in specific environmental niches. This is an uncharacterized protein from Escherichia coli (strain K12).